A 420-amino-acid chain; its full sequence is MTKWKRANPNGTRDYLFEECTLIEEVEQKLRRTFLERGYEEIRTPTIEFYDVFAFQSRPIDEEKMYKFFDEKGRIIVLRPDMTIPLARVIGTQRCDTPLKVTYSGNVFRANESLTGKYNEIVQSGIEIIGIDNVRAEIECVISVIQSLQKLKVQSFTIEIGQVQLYKCIVKKLSIHEEEEKVLRTYIESKNYAALSNFIREKNFDRCDETVRLLEKLPRLFGNLEVIEEAEKLASSNEMKMAIARVKEIYEAIDKLGYGSYISIDLGMIQHLDYYTGVIFKGYIYEIGEEIVSGGRYDELIGNFGEMLPAVGLAVQVNQIVKALQEQQEPYERKRIDIMIHYELNRLAEAERLRNLLQKDGKKVEISLCSNLNDTFQFARKNQIVTVVEAKNESLVEYVWNEKWVVQKEGETSCVTFKLR.

Belongs to the class-II aminoacyl-tRNA synthetase family. HisZ subfamily. As to quaternary structure, heteromultimer composed of HisG and HisZ subunits.

The protein localises to the cytoplasm. Its pathway is amino-acid biosynthesis; L-histidine biosynthesis; L-histidine from 5-phospho-alpha-D-ribose 1-diphosphate: step 1/9. Functionally, required for the first step of histidine biosynthesis. May allow the feedback regulation of ATP phosphoribosyltransferase activity by histidine. The sequence is that of ATP phosphoribosyltransferase regulatory subunit from Bacillus cereus (strain ATCC 10987 / NRS 248).